Consider the following 352-residue polypeptide: Ribosomal RNA large subunit methyltransferase M (352 aa).

Residues Ser-187, 218–221 (APGG), Asp-237, Asp-257, and Asp-273 each bind S-adenosyl-L-methionine. Lys-302 acts as the Proton acceptor in catalysis.

Belongs to the class I-like SAM-binding methyltransferase superfamily. RNA methyltransferase RlmE family. RlmM subfamily. Monomer.

It localises to the cytoplasm. It carries out the reaction cytidine(2498) in 23S rRNA + S-adenosyl-L-methionine = 2'-O-methylcytidine(2498) in 23S rRNA + S-adenosyl-L-homocysteine + H(+). Functionally, catalyzes the 2'-O-methylation at nucleotide C2498 in 23S rRNA. In Methylococcus capsulatus (strain ATCC 33009 / NCIMB 11132 / Bath), this protein is Ribosomal RNA large subunit methyltransferase M.